Consider the following 1012-residue polypeptide: Putative cellulose synthase-like protein D5 (1012 aa).

The disordered stretch occupies residues 1 to 85 (MSGDYANYTV…APSSNKSLLV (85 aa)). The span at 20–37 (PSGGAPPAAPSAGGARPG) shows a compositional bias: low complexity. Basic and acidic residues predominate over residues 57–69 (GGGDDGAKMDRRL). The next 2 membrane-spanning stretches (helical) occupy residues 150 to 170 (ILSPYRLLVLVRFVALFLFLV) and 180 to 200 (ALWLWGISIVCEFWFAFSWLL). The active site involves D280. A disordered region spans residues 597–620 (PRQGSEAMPGAGGGRSGGGSVGGD). The span at 606 to 618 (GAGGGRSGGGSVG) shows a compositional bias: gly residues. D717 is a catalytic residue. 6 helical membrane-spanning segments follow: residues 799 to 819 (LFLIMYCLLPALSLFSGQFIV), 825 to 845 (TFLSYLLLITITLMLLCLLEV), 871 to 891 (LAAVLQGLLKVVAGIEISFTL), 914 to 934 (SLFIPPLAVIGINIIALVVGV), 948 to 968 (LLGGGFFSFWVLAHYYPFAKG), and 978 to 998 (TIVYVWAGLISITVSLLWITI).

It belongs to the glycosyltransferase 2 family. Plant cellulose synthase-like D subfamily.

Its subcellular location is the golgi apparatus membrane. In terms of biological role, thought to be a Golgi-localized beta-glycan synthase that polymerize the backbones of noncellulosic polysaccharides (hemicelluloses) of plant cell wall. The sequence is that of Putative cellulose synthase-like protein D5 (CSLD5) from Oryza sativa subsp. indica (Rice).